Here is a 76-residue protein sequence, read N- to C-terminus: DNA-directed RNA polymerase subunit omega (76 aa).

Belongs to the RNA polymerase subunit omega family. In terms of assembly, the RNAP catalytic core consists of 2 alpha, 1 beta, 1 beta' and 1 omega subunit. When a sigma factor is associated with the core the holoenzyme is formed, which can initiate transcription.

It catalyses the reaction RNA(n) + a ribonucleoside 5'-triphosphate = RNA(n+1) + diphosphate. Promotes RNA polymerase assembly. Latches the N- and C-terminal regions of the beta' subunit thereby facilitating its interaction with the beta and alpha subunits. The polypeptide is DNA-directed RNA polymerase subunit omega (rpoZ) (Aquifex aeolicus (strain VF5)).